The chain runs to 231 residues: Orotidine 5'-phosphate decarboxylase (231 aa).

Substrate is bound by residues Asp-11, Lys-33, 60-69, Thr-117, Arg-178, Gln-187, Gly-207, and Arg-208; that span reads DLKFHDIPNT. Lys-62 (proton donor) is an active-site residue.

This sequence belongs to the OMP decarboxylase family. Type 1 subfamily. In terms of assembly, homodimer.

The catalysed reaction is orotidine 5'-phosphate + H(+) = UMP + CO2. The protein operates within pyrimidine metabolism; UMP biosynthesis via de novo pathway; UMP from orotate: step 2/2. Catalyzes the decarboxylation of orotidine 5'-monophosphate (OMP) to uridine 5'-monophosphate (UMP). The sequence is that of Orotidine 5'-phosphate decarboxylase from Nitrosomonas europaea (strain ATCC 19718 / CIP 103999 / KCTC 2705 / NBRC 14298).